The primary structure comprises 498 residues: Diacylglycerol O-acyltransferase 1 (498 aa).

Residues 1-66 (MGDRGGAGSS…AHTRDKDRQT (66 aa)) form a disordered region. Residues 1-92 (MGDRGGAGSS…SLFSSDSGFS (92 aa)) lie on the Cytoplasmic side of the membrane. The interval 1-96 (MGDRGGAGSS…SDSGFSNYRG (96 aa)) is involved in homomerization. At S20 the chain carries Phosphoserine. Over residues 58-68 (HTRDKDRQTSV) the composition is skewed to basic and acidic residues. The helical transmembrane segment at 93–127 (NYRGILNWCVVMLILSNARLSLENLIKYGILVDPI) threads the bilayer. Residues 128 to 139 (QVVSLFLKDPYS) are Lumenal-facing. Positions 128 to 139 (QVVSLFLKDPYS) are extracellular loop 1 (EL1). The chain crosses the membrane as a helical span at residues 140–165 (WPAPCLIIASNIFIVATFQIEKRLSV). The MBOAT fold stretch occupies residues 140 to 498 (WPAPCLIIAS…VLNYDAPVGA (359 aa)). Residues 166 to 170 (GALTE) are Cytoplasmic-facing. The helical transmembrane segment at 171-193 (QMGLLLHVVNLATIICFPAAVAL) threads the bilayer. At 194-200 (LVESITP) the chain is on the lumenal side. The chain crosses the membrane as a helical span at residues 201–232 (VGSLFALASYSIIFLKLSSYRDVNLWCRQRRV). Over 233–284 (KAKAVSAGKKVSGAAAQNTVSYPDNLTYRDLYYFIFAPTLCYELNFPRSPRI) the chain is Cytoplasmic. The segment at 235–287 (KAVSAGKKVSGAAAQNTVSYPDNLTYRDLYYFIFAPTLCYELNFPRSPRIRKR) is intracellular loop 1 (IL1). A helical membrane pass occupies residues 285–319 (RKRFLLRRVLEMLFFTQLQVGLIQQWMVPTIQNSM). Topologically, residues 320–326 (KPFKDMD) are lumenal. The chain crosses the membrane as a helical span at residues 327–364 (YSRIIERLLKLAVPNHLIWLIFFYWLFHSCLNAVAELL). Topologically, residues 365-410 (QFGDREFYRDWWNAESVTYFWQNWNIPVHKWCIRHFYKPMLRLGSN) are cytoplasmic. Positions 365-410 (QFGDREFYRDWWNAESVTYFWQNWNIPVHKWCIRHFYKPMLRLGSN) are intracellular loop 2 (IL2). The short motif at 371–377 (FYRDWWN) is the FYXDWWN motif element. An acyl-CoA is bound by residues 385 to 393 (WQNWNIPVH), Y401, and R415. The amphipathic helix (AH) stretch occupies residues 391-405 (PVHKWCIRHFYKPML). A helical transmembrane segment spans residues 411 to 431 (KWMARTGVFWASAFFHEYLVS). H426 is an active-site residue. At 432-439 (IPLRMFRL) the chain is on the lumenal side. Residues 440–458 (WAFTAMMAQVPLAWIVNRF) traverse the membrane as a helical segment. At 459–460 (FQ) the chain is on the cytoplasmic side. The helical transmembrane segment at 461-492 (GNYGNAAVWVTLIIGQPVAVLMYVHDYYVLNY) threads the bilayer. Y488 lines the an acyl-CoA pocket. The Lumenal portion of the chain corresponds to 493–498 (DAPVGA).

The protein belongs to the membrane-bound acyltransferase family. Sterol o-acyltransferase subfamily. Homodimer or homotetramer; both forms have similar enzymatic activities.

The protein localises to the endoplasmic reticulum membrane. The enzyme catalyses an acyl-CoA + a 1,2-diacyl-sn-glycerol = a triacyl-sn-glycerol + CoA. The catalysed reaction is all-trans-retinol + an acyl-CoA = an all-trans-retinyl ester + CoA. It carries out the reaction 2-(9Z-octadecenoyl)-glycerol + (9Z)-octadecenoyl-CoA = 1,2-di-(9Z-octadecenoyl)-sn-glycerol + CoA. It catalyses the reaction 1,2-di-(9Z-octadecenoyl)-sn-glycerol + (9Z)-octadecenoyl-CoA = 1,2,3-tri-(9Z-octadecenoyl)-glycerol + CoA. The enzyme catalyses all-trans-retinol + hexadecanoyl-CoA = all-trans-retinyl hexadecanoate + CoA. The catalysed reaction is 1-O-(9Z-octadecenyl)-glycerol + (9Z)-octadecenoyl-CoA = 1-O-(9Z-octadecyl)-3-(9Z-octadecenoyl)-glycerol + CoA. It carries out the reaction 1-O-(9Z-octadecyl)-3-(9Z-octadecenoyl)-glycerol + (9Z)-octadecenoyl-CoA = 1-O-(9Z-octadecenyl)-2,3-di-(9Z-octadecenoyl)glycerol + CoA. It catalyses the reaction 1-(9Z-octadecenoyl)-glycerol + (9Z)-octadecenoyl-CoA = 1,2-di-(9Z-octadecenoyl)-glycerol + CoA. The enzyme catalyses 1,2-di-(9Z-octadecenoyl)-glycerol + (9Z)-octadecenoate + H(+) = 1,2,3-tri-(9Z-octadecenoyl)-glycerol + H2O. The catalysed reaction is 1-octadecanoyl-2-(5Z,8Z,11Z,14Z-eicosatetraenoyl)-sn-glycerol + (9Z)-octadecenoyl-CoA = 1-octadecanoyl-2-(5Z,8Z,11Z,14Z)-eicosatetraenoyl-3-(9Z)-octadecenoyl-sn-glycerol + CoA. It carries out the reaction hexadecane-1,2-diol + 2 hexadecanoyl-CoA = 1,2-O,O-dihexadecanoyl-1,2-hexadecanediol + 2 CoA. It catalyses the reaction hexadecane-1,2-diol + hexadecanoyl-CoA = 2-hydroxyhexadecyl hexadecanoate + CoA. The enzyme catalyses 2-(9Z-octadecenoyl)-glycerol + hexadecanoyl-CoA = 1-hexadecanoyl-2-(9Z-octadecenoyl)-sn-glycerol + CoA. The catalysed reaction is 1,2-di-(9Z-octadecenoyl)-sn-glycerol + hexadecanoyl-CoA = 1,2-di-(9Z)-octadecenoyl-3-hexadecanoyl-sn-glycerol + CoA. It carries out the reaction hexadecan-1-ol + hexadecanoyl-CoA = hexadecanyl hexadecanoate + CoA. It catalyses the reaction 13-cis-retinol + hexadecanoyl-CoA = 13-cis-retinyl hexadecanoate + CoA. The enzyme catalyses 1,3-di-(9Z-octadecenoyl)-glycerol + (9Z)-octadecenoyl-CoA = 1,2,3-tri-(9Z-octadecenoyl)-glycerol + CoA. The catalysed reaction is 2,3-di-(9Z)-octadecenoyl-sn-glycerol + (9Z)-octadecenoyl-CoA = 1,2,3-tri-(9Z-octadecenoyl)-glycerol + CoA. It participates in lipid metabolism; glycerolipid metabolism. Its function is as follows. Catalyzes the terminal and only committed step in triacylglycerol synthesis by using diacylglycerol and fatty acyl CoA as substrates. Highly expressed in epithelial cells of the small intestine and its activity is essential for the absorption of dietary fats. In liver, plays a role in esterifying exogenous fatty acids to glycerol, and is required to synthesize fat for storage. Also present in female mammary glands, where it produces fat in the milk. May be involved in VLDL (very low density lipoprotein) assembly. In contrast to DGAT2 it is not essential for survival. Functions as the major acyl-CoA retinol acyltransferase (ARAT) in the skin, where it acts to maintain retinoid homeostasis and prevent retinoid toxicity leading to skin and hair disorders. Exhibits additional acyltransferase activities, includin acyl CoA:monoacylglycerol acyltransferase (MGAT), wax monoester and wax diester synthases. Also able to use 1-monoalkylglycerol (1-MAkG) as an acyl acceptor for the synthesis of monoalkyl-monoacylglycerol (MAMAG). This is Diacylglycerol O-acyltransferase 1 from Rattus norvegicus (Rat).